The chain runs to 141 residues: Hemoglobin subunit alpha (141 aa).

Positions 1-141 (VLSAKDKTNI…VSTVLTSKYR (141 aa)) constitute a Globin domain. S3 is subject to Phosphoserine. K7 bears the N6-succinyllysine mark. Position 8 is a phosphothreonine (T8). Residue K16 is modified to N6-acetyllysine; alternate. An N6-succinyllysine; alternate modification is found at K16. Y24 carries the post-translational modification Phosphotyrosine. K40 carries the post-translational modification N6-succinyllysine. At S49 the chain carries Phosphoserine. H58 is an O2 binding site. Heme b is bound at residue H87. S102 is modified (phosphoserine). A Phosphothreonine modification is found at T108. Residues S124 and S131 each carry the phosphoserine modification. Phosphothreonine occurs at positions 134 and 137. Residue S138 is modified to Phosphoserine.

The protein belongs to the globin family. Heterotetramer of two alpha chains and two beta chains. As to expression, red blood cells.

Functionally, involved in oxygen transport from the lung to the various peripheral tissues. Hemopressin acts as an antagonist peptide of the cannabinoid receptor CNR1. Hemopressin-binding efficiently blocks cannabinoid receptor CNR1 and subsequent signaling. The protein is Hemoglobin subunit alpha (HBA) of Mesocricetus auratus (Golden hamster).